Consider the following 426-residue polypeptide: Cytochrome c biogenesis protein CcsB (426 aa).

Helical transmembrane passes span 11 to 31 (LRVA…GTAI), 69 to 89 (SVWF…CSWR), and 159 to 179 (VGPL…VWGV).

This sequence belongs to the Ccs1/CcsB family. In terms of assembly, may interact with CcsA.

It localises to the cellular thylakoid membrane. Required during biogenesis of c-type cytochromes (cytochrome c6 and cytochrome f) at the step of heme attachment. In Synechococcus sp. (strain CC9902), this protein is Cytochrome c biogenesis protein CcsB.